A 398-amino-acid chain; its full sequence is tRNA(Ile)-lysidine synthase (398 aa).

25–30 is a binding site for ATP; sequence SGGVDS.

The protein belongs to the tRNA(Ile)-lysidine synthase family.

Its subcellular location is the cytoplasm. It carries out the reaction cytidine(34) in tRNA(Ile2) + L-lysine + ATP = lysidine(34) in tRNA(Ile2) + AMP + diphosphate + H(+). Ligates lysine onto the cytidine present at position 34 of the AUA codon-specific tRNA(Ile) that contains the anticodon CAU, in an ATP-dependent manner. Cytidine is converted to lysidine, thus changing the amino acid specificity of the tRNA from methionine to isoleucine. This Francisella tularensis subsp. tularensis (strain SCHU S4 / Schu 4) protein is tRNA(Ile)-lysidine synthase.